A 228-amino-acid chain; its full sequence is Enolase-phosphatase E1 (228 aa).

This sequence belongs to the HAD-like hydrolase superfamily. MasA/MtnC family. As to quaternary structure, monomer. It depends on Mg(2+) as a cofactor.

It catalyses the reaction 5-methylsulfanyl-2,3-dioxopentyl phosphate + H2O = 1,2-dihydroxy-5-(methylsulfanyl)pent-1-en-3-one + phosphate. It participates in amino-acid biosynthesis; L-methionine biosynthesis via salvage pathway; L-methionine from S-methyl-5-thio-alpha-D-ribose 1-phosphate: step 3/6. It functions in the pathway amino-acid biosynthesis; L-methionine biosynthesis via salvage pathway; L-methionine from S-methyl-5-thio-alpha-D-ribose 1-phosphate: step 4/6. In terms of biological role, bifunctional enzyme that catalyzes the enolization of 2,3-diketo-5-methylthiopentyl-1-phosphate (DK-MTP-1-P) into the intermediate 2-hydroxy-3-keto-5-methylthiopentenyl-1-phosphate (HK-MTPenyl-1-P), which is then dephosphorylated to form the acireductone 1,2-dihydroxy-3-keto-5-methylthiopentene (DHK-MTPene). In Picosynechococcus sp. (strain ATCC 27264 / PCC 7002 / PR-6) (Agmenellum quadruplicatum), this protein is Enolase-phosphatase E1.